Reading from the N-terminus, the 142-residue chain is Neurofilament heavy polypeptide (142 aa).

One can recognise an IF rod domain in the interval 1-142 (MRGAVLRLGA…EAAKVNTDAM (142 aa)). Residues 26 to 74 (IAHVRQRLDDEARQRQEAEAAARALARFAQEAEAARVELQKKAQALQEE) adopt a coiled-coil conformation.

It belongs to the intermediate filament family. As to quaternary structure, forms heterodimers with NEFL; which can further hetero-oligomerize (in vitro). Forms heterodimers with INA (in vitro). Post-translationally, there are a number of repeats of the tripeptide K-S-P, NFH is phosphorylated on a number of the serines in this motif. It is thought that phosphorylation of NFH results in the formation of interfilament cross bridges that are important in the maintenance of axonal caliber. Phosphorylation seems to play a major role in the functioning of the larger neurofilament polypeptides (NF-M and NF-H), the levels of phosphorylation being altered developmentally and coincidentally with a change in the neurofilament function. In terms of processing, phosphorylated in the head and rod regions by the PKC kinase PKN1, leading to the inhibition of polymerization.

It is found in the cytoplasm. It localises to the cytoskeleton. The protein resides in the cell projection. The protein localises to the axon. Neurofilaments usually contain three intermediate filament proteins: NEFL, NEFM, and NEFH which are involved in the maintenance of neuronal caliber. NEFH has an important function in mature axons that is not subserved by the two smaller NF proteins. May additionally cooperate with the neuronal intermediate filament proteins PRPH and INA to form neuronal filamentous networks. The sequence is that of Neurofilament heavy polypeptide (NEFH) from Sus scrofa (Pig).